Consider the following 276-residue polypeptide: Large ribosomal subunit protein uL2 (276 aa).

A disordered region spans residues 224-276 (VMNPVDHPHGGGEGKAPIGRKSPMTPWGKPTLGYKTRKKKNKSDKFIIRRRKK). Positions 258–276 (KTRKKKNKSDKFIIRRRKK) are enriched in basic residues.

Belongs to the universal ribosomal protein uL2 family. As to quaternary structure, part of the 50S ribosomal subunit. Forms a bridge to the 30S subunit in the 70S ribosome.

Its function is as follows. One of the primary rRNA binding proteins. Required for association of the 30S and 50S subunits to form the 70S ribosome, for tRNA binding and peptide bond formation. It has been suggested to have peptidyltransferase activity; this is somewhat controversial. Makes several contacts with the 16S rRNA in the 70S ribosome. The sequence is that of Large ribosomal subunit protein uL2 from Geobacillus stearothermophilus (Bacillus stearothermophilus).